The following is a 396-amino-acid chain: L-lactate dehydrogenase (396 aa).

Positions 1–380 (MIISAASDYR…TQDSLVQGLG (380 aa)) constitute an FMN hydroxy acid dehydrogenase domain. Residue Tyr24 coordinates substrate. FMN is bound by residues Ser106 and Gln127. Tyr129 serves as a coordination point for substrate. Thr155 provides a ligand contact to FMN. Arg164 is a binding site for substrate. Lys251 is a binding site for FMN. Catalysis depends on His275, which acts as the Proton acceptor. Arg278 contacts substrate. FMN is bound at residue 306 to 330 (DSGIRNGLDVVRMIALGADTILLGR).

This sequence belongs to the FMN-dependent alpha-hydroxy acid dehydrogenase family. It depends on FMN as a cofactor.

Its subcellular location is the cell inner membrane. The catalysed reaction is (S)-lactate + A = pyruvate + AH2. Its function is as follows. Catalyzes the conversion of L-lactate to pyruvate. Is coupled to the respiratory chain. The chain is L-lactate dehydrogenase from Escherichia coli O81 (strain ED1a).